The sequence spans 1233 residues: Structural maintenance of chromosomes protein 1A (1233 aa).

Residue 32–39 (GPNGSGKS) coordinates ATP. Coiled-coil stretches lie at residues 104 to 124 (EYKINNKVVQLHEYSEELEKL) and 163 to 503 (ELAQ…KAEI). Residues 284–293 (IKEKDSELNQ) show a composition bias toward basic and acidic residues. Disordered stretches follow at residues 284-308 (IKEKDSELNQKRPQYIKAKENTSHK) and 348-369 (QEFEERMEEESQSQGRDLTLEE). 2 positions are modified to phosphoserine: Ser-358 and Ser-360. Positions 515–629 (VYGRLIDLCQ…DNVEDARRIA (115 aa)) constitute an SMC hinge domain. Lys-648 and Lys-713 each carry N6-acetyllysine. The stretch at 660–935 (KAKARRWDEK…RHNLLQACKM (276 aa)) forms a coiled coil. Residues 947–966 (MDDISQEEGSSQGEDSVSGS) are disordered. The segment covering 953 to 966 (EEGSSQGEDSVSGS) has biased composition (low complexity). The residue at position 957 (Ser-957) is a Phosphoserine; by ATM. Position 962 is a phosphoserine (Ser-962). Ser-966 is subject to Phosphoserine; by ATM and ATR. Ser-970 is subject to Phosphoserine. Residues 991-1068 (KDAQAEEEIK…FEQIKKERFD (78 aa)) are a coiled coil. N6-acetyllysine is present on Lys-1037.

Belongs to the SMC family. SMC1 subfamily. Forms a heterodimer with SMC3 in cohesin complexes. Cohesin complexes are composed of the SMC1 (SMC1A or SMC1B) and SMC3 heterodimer attached via their SMC hinge domain, RAD21 which link them, and one STAG protein (STAG1, STAG2 or STAG3), which interacts with RAD21. In germ cell cohesin complexes, SMC1A is mutually exclusive with SMC1B. Interacts with BRCA1. Found in a complex with CDCA5, SMC3 and RAD21, PDS5A/SCC-112 and PDS5B/APRIN. Interacts with NDC80. Interacts with BRAT1. Found in a complex containing POLE and SMC3. Interacts with RPGR, STAG3 and SYCP2. The cohesin complex interacts with the cohesin loading complex subunits NIPBL/Scc2 (via HEAT repeats) and MAU2/Scc4. NIPBL directly contacts all members of the complex, RAD21, SMC1A/B, SMC3 and STAG1. Ubiquitinated by the DCX(DCAF15) complex, leading to its degradation. Post-translationally, phosphorylated by ATM upon ionizing radiation in a NBS1-dependent manner. Phosphorylated by ATR upon DNA methylation in a MSH2/MSH6-dependent manner. Phosphorylation of Ser-957 and Ser-966 activates it and is required for S-phase checkpoint activation.

Its subcellular location is the nucleus. It localises to the chromosome. It is found in the centromere. The protein resides in the kinetochore. In terms of biological role, involved in chromosome cohesion during cell cycle and in DNA repair. Central component of cohesin complex. The cohesin complex is required for the cohesion of sister chromatids after DNA replication. The cohesin complex apparently forms a large proteinaceous ring within which sister chromatids can be trapped. At anaphase, the complex is cleaved and dissociates from chromatin, allowing sister chromatids to segregate. The cohesin complex may also play a role in spindle pole assembly during mitosis. Involved in DNA repair via its interaction with BRCA1 and its related phosphorylation by ATM, or via its phosphorylation by ATR. Works as a downstream effector both in the ATM/NBS1 branch and in the ATR/MSH2 branch of S-phase checkpoint. This is Structural maintenance of chromosomes protein 1A (SMC1A) from Homo sapiens (Human).